A 305-amino-acid chain; its full sequence is Glycine--tRNA ligase alpha subunit (305 aa).

Belongs to the class-II aminoacyl-tRNA synthetase family. Tetramer of two alpha and two beta subunits.

The protein localises to the cytoplasm. It catalyses the reaction tRNA(Gly) + glycine + ATP = glycyl-tRNA(Gly) + AMP + diphosphate. This chain is Glycine--tRNA ligase alpha subunit, found in Streptococcus pyogenes serotype M12 (strain MGAS2096).